We begin with the raw amino-acid sequence, 477 residues long: 23S rRNA (uracil(1939)-C(5))-methyltransferase RlmD (477 aa).

The 60-residue stretch at 7 to 66 (KTENFPPDWLLVESLDLEAQGVAHRADGKVVFIKGALPFELVSANVHRKKNNWEQGVVTA) folds into the TRAM domain. Positions 79, 89, 92, and 171 each coordinate [4Fe-4S] cluster. 6 residues coordinate S-adenosyl-L-methionine: Gln-280, Phe-309, Asn-314, Glu-330, Asn-365, and Asp-386. Cys-432 functions as the Nucleophile in the catalytic mechanism.

This sequence belongs to the class I-like SAM-binding methyltransferase superfamily. RNA M5U methyltransferase family. RlmD subfamily.

It catalyses the reaction uridine(1939) in 23S rRNA + S-adenosyl-L-methionine = 5-methyluridine(1939) in 23S rRNA + S-adenosyl-L-homocysteine + H(+). In terms of biological role, catalyzes the formation of 5-methyl-uridine at position 1939 (m5U1939) in 23S rRNA. This Albidiferax ferrireducens (strain ATCC BAA-621 / DSM 15236 / T118) (Rhodoferax ferrireducens) protein is 23S rRNA (uracil(1939)-C(5))-methyltransferase RlmD.